A 127-amino-acid polypeptide reads, in one-letter code: Glycine cleavage system H protein (127 aa).

The Lipoyl-binding domain maps to 22–104 (EVVIGITHFA…YEGAWMVKVE (83 aa)). K63 is modified (N6-lipoyllysine).

The protein belongs to the GcvH family. As to quaternary structure, the glycine cleavage system is composed of four proteins: P, T, L and H. Requires (R)-lipoate as cofactor.

Its function is as follows. The glycine cleavage system catalyzes the degradation of glycine. The H protein shuttles the methylamine group of glycine from the P protein to the T protein. In terms of biological role, is also involved in protein lipoylation via its role as an octanoyl/lipoyl carrier protein intermediate. The sequence is that of Glycine cleavage system H protein from Bacillus cereus (strain ATCC 10987 / NRS 248).